A 620-amino-acid polypeptide reads, in one-letter code: 1-deoxy-D-xylulose-5-phosphate synthase (620 aa).

Residues histidine 80 and 121-123 (GHS) contribute to the thiamine diphosphate site. Aspartate 152 provides a ligand contact to Mg(2+). Residues 153 to 154 (GA), asparagine 181, tyrosine 288, and glutamate 370 contribute to the thiamine diphosphate site. Residue asparagine 181 coordinates Mg(2+).

It belongs to the transketolase family. DXPS subfamily. In terms of assembly, homodimer. Mg(2+) serves as cofactor. Requires thiamine diphosphate as cofactor.

It catalyses the reaction D-glyceraldehyde 3-phosphate + pyruvate + H(+) = 1-deoxy-D-xylulose 5-phosphate + CO2. The protein operates within metabolic intermediate biosynthesis; 1-deoxy-D-xylulose 5-phosphate biosynthesis; 1-deoxy-D-xylulose 5-phosphate from D-glyceraldehyde 3-phosphate and pyruvate: step 1/1. Catalyzes the acyloin condensation reaction between C atoms 2 and 3 of pyruvate and glyceraldehyde 3-phosphate to yield 1-deoxy-D-xylulose-5-phosphate (DXP). The sequence is that of 1-deoxy-D-xylulose-5-phosphate synthase from Escherichia coli O139:H28 (strain E24377A / ETEC).